A 247-amino-acid chain; its full sequence is Probable transcriptional regulatory protein LPC_0711 (247 aa).

It belongs to the TACO1 family.

The protein resides in the cytoplasm. This is Probable transcriptional regulatory protein LPC_0711 from Legionella pneumophila (strain Corby).